We begin with the raw amino-acid sequence, 342 residues long: Heat-inducible transcription repressor HrcA (342 aa).

This sequence belongs to the HrcA family.

In terms of biological role, negative regulator of class I heat shock genes (grpE-dnaK-dnaJ and groELS operons). Prevents heat-shock induction of these operons. The chain is Heat-inducible transcription repressor HrcA from Leptospira interrogans serogroup Icterohaemorrhagiae serovar copenhageni (strain Fiocruz L1-130).